Here is a 1207-residue protein sequence, read N- to C-terminus: Brassinosteroid LRR receptor kinase (1207 aa).

Positions 1–34 are cleaved as a signal peptide; the sequence is MKAHKTVFNQHPLSLNKLFFVLLLIFFLPPASPA. The Cys pair 1 motif lies at 71–78; sequence CSFTGVSC. 20 LRR repeats span residues 109–131, 135–157, 161–181, 186–207, 213–234, 235–257, 258–280, 282–304, 305–325, 329–350, 353–374, 378–400, 402–423, 428–450, 452–474, 476–499, 500–523, 524–547, 548–570, and 572–594; these read NLESLVLKNANLSGSLTSAAKSQ, TLDSIDLAENTISGPISDISSFG, NLKSLNLSKNFLDPPGKEMLK, SLQVLDLSYNNISGFNLFPWVS, ELEFFSLKGNKLAGSIPELDFK, NLSYLDLSANNFSTVFPSFKDCS, NLQHLDLSSNKFYGDIGSSLSSC, KLSFLNLTNNQFVGLVPKLPSES, LQYLYLRGNDFQGVYPNQLAD, TVVELDLSYNNFSGMVPESLGE, SLELVDISYNNFSGKLPVDTLS, NIKTMVLSFNKFVGGLPDSFSNL, KLETLDMSSNNLTGVIPSGICK, NLKVLYLQNNLFKGPIPDSLSNC, QLVSLDLSFNYLTGSIPSSLGSL, KLKDLILWLNQLSGEIPQELMYLQ, ALENLILDFNDLTGPIPASLSNCT, KLNWISLSNNQLSGEIPASLGRLS, NLAILKLGNNSISGNIPAELGNC, and SLIWLDLNTNFLNGSIPPPLFKQ. The N-linked (GlcNAc...) asparagine glycan is linked to Asn119. N-linked (GlcNAc...) asparagine glycosylation is found at Asn166 and Asn196. Residues Asn235 and Asn245 are each glycosylated (N-linked (GlcNAc...) asparagine). The N-linked (GlcNAc...) asparagine glycan is linked to Asn287. 2 N-linked (GlcNAc...) asparagine glycosylation sites follow: Asn339 and Asn363. Asn412 and Asn449 each carry an N-linked (GlcNAc...) asparagine glycan. N-linked (GlcNAc...) asparagine glycosylation is present at Asn521. 4 N-linked (GlcNAc...) asparagine glycosylation sites follow: Asn556, Asn584, Asn646, and Asn662. 4 LRR repeats span residues 664-686, 688-711, 712-735, and 736-758; these read SMIFLDLSYNKLEGSIPKELGAM, YLSILNLGHNDLSGMIPQQLGGLK, NVAILDLSYNRFNGTIPNSLTSLT, and LLGEIDLSNNNLSGMIPESAPFD. Residues Asn724, Asn746, and Asn767 are each glycosylated (N-linked (GlcNAc...) asparagine). The Cys pair 2 motif lies at 771–779; that stretch reads CGYPLPIPC. The chain crosses the membrane as a helical span at residues 803 to 823; it reads SVAMGLLFSLFCIFGLIIVAI. In terms of domain architecture, Protein kinase spans 888-1163; the sequence is FHNDSLVGSG…IQVMAMFKEI (276 aa). ATP contacts are provided by residues 894 to 902 and Lys916; that span reads VGSGGFGDV. Asp1014 acts as the Proton acceptor in catalysis.

Belongs to the protein kinase superfamily. Ser/Thr protein kinase family.

It is found in the cell membrane. It carries out the reaction L-seryl-[protein] + ATP = O-phospho-L-seryl-[protein] + ADP + H(+). It catalyses the reaction L-threonyl-[protein] + ATP = O-phospho-L-threonyl-[protein] + ADP + H(+). Functionally, receptor with a serine/threonine-protein kinase activity. Regulates, in response to brassinosteroid binding, a signaling cascade involved in plant development, including expression of light- and stress-regulated genes, promotion of cell elongation, normal leaf and chloroplast senescence, and flowering. May be involved in a feedback regulation of brassinosteroid biosynthesis. May be also involved in the perception of systemin, a peptide hormone responsible for the systemic activation of defense genes in leaves of wounded plants. This Solanum lycopersicum (Tomato) protein is Brassinosteroid LRR receptor kinase (CURL3).